We begin with the raw amino-acid sequence, 681 residues long: DNA-directed RNA polymerase subunit beta' (681 aa).

Zn(2+)-binding residues include Cys69, Cys71, Cys87, and Cys90. Residues Asp489, Asp491, and Asp493 each contribute to the Mg(2+) site.

It belongs to the RNA polymerase beta' chain family. RpoC1 subfamily. In terms of assembly, in plastids the minimal PEP RNA polymerase catalytic core is composed of four subunits: alpha, beta, beta', and beta''. When a (nuclear-encoded) sigma factor is associated with the core the holoenzyme is formed, which can initiate transcription. It depends on Mg(2+) as a cofactor. Zn(2+) is required as a cofactor.

It localises to the plastid. It is found in the chloroplast. The enzyme catalyses RNA(n) + a ribonucleoside 5'-triphosphate = RNA(n+1) + diphosphate. DNA-dependent RNA polymerase catalyzes the transcription of DNA into RNA using the four ribonucleoside triphosphates as substrates. The polypeptide is DNA-directed RNA polymerase subunit beta' (Solanum bulbocastanum (Wild potato)).